A 65-amino-acid chain; its full sequence is Large ribosomal subunit protein bL28 (65 aa).

Positions 1–26 (MARRDDLTNKGPMSGNKRSHALNATK) are disordered. Over residues 17–26 (KRSHALNATK) the composition is skewed to basic residues.

It belongs to the bacterial ribosomal protein bL28 family.

The polypeptide is Large ribosomal subunit protein bL28 (Mycoplasma mobile (strain ATCC 43663 / 163K / NCTC 11711) (Mesomycoplasma mobile)).